A 206-amino-acid polypeptide reads, in one-letter code: Small ribosomal subunit protein uS4A (206 aa).

Residues 98 to 164 form the S4 RNA-binding domain; the sequence is MRLDNVVYKL…EKFKTFAENP (67 aa).

Belongs to the universal ribosomal protein uS4 family. In terms of assembly, part of the 30S ribosomal subunit. Contacts protein S5. The interaction surface between S4 and S5 is involved in control of translational fidelity.

In terms of biological role, one of the primary rRNA binding proteins, it binds directly to 16S rRNA where it nucleates assembly of the body of the 30S subunit. Its function is as follows. With S5 and S12 plays an important role in translational accuracy. This is Small ribosomal subunit protein uS4A from Clostridium novyi (strain NT).